The following is a 126-amino-acid chain: Acidic phospholipase A2 S1E6-a (126 aa).

Positions 1–3 are cleaved as a signal peptide; it reads VEG. Cystine bridges form between cysteine 29-cysteine 119, cysteine 31-cysteine 47, cysteine 46-cysteine 98, cysteine 52-cysteine 126, cysteine 53-cysteine 91, cysteine 60-cysteine 84, and cysteine 78-cysteine 89. Ca(2+) contacts are provided by tyrosine 30, glycine 32, and glycine 34. Histidine 50 is an active-site residue. Residue aspartate 51 coordinates Ca(2+). Aspartate 92 is a catalytic residue.

As to quaternary structure, homodimer. The cofactor is Ca(2+). As to expression, expressed by the venom gland.

It is found in the secreted. The enzyme catalyses a 1,2-diacyl-sn-glycero-3-phosphocholine + H2O = a 1-acyl-sn-glycero-3-phosphocholine + a fatty acid + H(+). Functionally, snake venom phospholipase A2 (PLA2) that inhibits ADP-induced platelet aggregation. PLA2 catalyzes the calcium-dependent hydrolysis of the 2-acyl groups in 3-sn-phosphoglycerides. This is Acidic phospholipase A2 S1E6-a from Calloselasma rhodostoma (Malayan pit viper).